A 263-amino-acid polypeptide reads, in one-letter code: Phosphonoacetaldehyde hydrolase (263 aa).

D10 (nucleophile) is an active-site residue. Residues D10 and A12 each contribute to the Mg(2+) site. Catalysis depends on K51, which acts as the Schiff-base intermediate with substrate. D184 provides a ligand contact to Mg(2+).

This sequence belongs to the HAD-like hydrolase superfamily. PhnX family. In terms of assembly, homodimer. The cofactor is Mg(2+).

It catalyses the reaction phosphonoacetaldehyde + H2O = acetaldehyde + phosphate + H(+). Functionally, involved in phosphonate degradation. This is Phosphonoacetaldehyde hydrolase from Bacteroides fragilis (strain ATCC 25285 / DSM 2151 / CCUG 4856 / JCM 11019 / LMG 10263 / NCTC 9343 / Onslow / VPI 2553 / EN-2).